The primary structure comprises 174 residues: Methylated protein MJ0556 (174 aa).

2 consecutive CBS domains span residues 28 to 87 and 91 to 156; these read MISG…YLNV and MLKN…IIKE.

Methylated at an undetermined residue between Ser-2 and Asp-26.

The chain is Methylated protein MJ0556 from Methanocaldococcus jannaschii (strain ATCC 43067 / DSM 2661 / JAL-1 / JCM 10045 / NBRC 100440) (Methanococcus jannaschii).